The following is a 122-amino-acid chain: Protein NIM1-INTERACTING 2 (122 aa).

Residues 1–22 (MNNSLKKEERVEEDNGKSDGNR) are compositionally biased toward basic and acidic residues. The segment at 1–28 (MNNSLKKEERVEEDNGKSDGNRGKPSTE) is disordered. The involved in NPR1/NIM1 interaction stretch occupies residues 39–45 (DEFFKIL). The Nuclear localization signal signature appears at 70–74 (KKRKR).

As to quaternary structure, interacts with NPR1 N-terminal region.

The protein resides in the nucleus. The sequence is that of Protein NIM1-INTERACTING 2 from Arabidopsis thaliana (Mouse-ear cress).